The following is a 335-amino-acid chain: Taste receptor type 2 member 119 (335 aa).

Residues 1–7 are Extracellular-facing; that stretch reads MMEGHML. The chain crosses the membrane as a helical span at residues 8–28; that stretch reads FFLLVVVVQFLTGVLANGLIV. Topologically, residues 29–43 are cytoplasmic; that stretch reads VVNAIDLIMWKKMAP. Residues 44 to 64 form a helical membrane-spanning segment; the sequence is LDLLLFCLATSRIILQLCILF. Residues 65–81 are Extracellular-facing; sequence AQLGLSCLVRHTLFADN. Asn81 is a glycosylation site (N-linked (GlcNAc...) asparagine). The helical transmembrane segment at 82–102 threads the bilayer; the sequence is VTFVYIINELSLWFATWLGVF. The Cytoplasmic segment spans residues 103 to 124; sequence YCAKIATIPHPLFLWLKMRISR. A helical membrane pass occupies residues 125–145; the sequence is LVPWLILASVVYVTVTTFIHS. Over 146 to 176 the chain is Extracellular; sequence RETSELPKQIFISFFSKNTTRVRPAHATLLS. An N-linked (GlcNAc...) asparagine glycan is attached at Asn163. The chain crosses the membrane as a helical span at residues 177–197; that stretch reads VFVFGLTLPFLIFTVAVLLLL. Residues 198 to 224 are Cytoplasmic-facing; it reads SSLWNHSRQMRTMVGTREPSRHALVSA. A helical transmembrane segment spans residues 225–245; that stretch reads MLSILSFLILYLSHDMVAVLI. Residues 246-256 lie on the Extracellular side of the membrane; the sequence is CTQGLHFGSRT. A helical transmembrane segment spans residues 257 to 277; it reads FAFCLLVIGMYPSLHSIVLIL. At 278 to 335 the chain is on the cytoplasmic side; that stretch reads GNPKLKRNAKTFIVHCKCCHCARAWVTSRNPRLSDLPVPATHHSANKTSCSEACIMPS.

Belongs to the G-protein coupled receptor T2R family. Expressed in subsets of taste receptor cells of the tongue and palate epithelium and exclusively in gustducin-positive cells. Expressed in 15% taste bud cells in circumvallate and foliate papillae but only in 2% in fungiform papillae. Expressed in the gastro and duodenal tissue. Not expressed in colon, liver, heart and kidney.

Its subcellular location is the membrane. Gustducin-coupled receptor implicated in the perception of bitter compounds in the oral cavity and the gastrointestinal tract. Signals through PLCB2 and the calcium-regulated cation channel TRPM5. The protein is Taste receptor type 2 member 119 (Tas2r119) of Mus musculus (Mouse).